A 485-amino-acid chain; its full sequence is Glutamyl-tRNA(Gln) amidotransferase subunit A (485 aa).

Active-site charge relay system residues include lysine 78 and serine 153. The active-site Acyl-ester intermediate is the serine 177.

It belongs to the amidase family. GatA subfamily. In terms of assembly, heterotrimer of A, B and C subunits.

The catalysed reaction is L-glutamyl-tRNA(Gln) + L-glutamine + ATP + H2O = L-glutaminyl-tRNA(Gln) + L-glutamate + ADP + phosphate + H(+). Its function is as follows. Allows the formation of correctly charged Gln-tRNA(Gln) through the transamidation of misacylated Glu-tRNA(Gln) in organisms which lack glutaminyl-tRNA synthetase. The reaction takes place in the presence of glutamine and ATP through an activated gamma-phospho-Glu-tRNA(Gln). In Desulfatibacillum aliphaticivorans, this protein is Glutamyl-tRNA(Gln) amidotransferase subunit A.